A 142-amino-acid chain; its full sequence is Large ribosomal subunit protein uL13 (142 aa).

The protein belongs to the universal ribosomal protein uL13 family. As to quaternary structure, part of the 50S ribosomal subunit.

This protein is one of the early assembly proteins of the 50S ribosomal subunit, although it is not seen to bind rRNA by itself. It is important during the early stages of 50S assembly. The sequence is that of Large ribosomal subunit protein uL13 from Glaesserella parasuis serovar 5 (strain SH0165) (Haemophilus parasuis).